A 394-amino-acid chain; its full sequence is Elongation factor Tu (394 aa).

Positions 10-204 (KAHVNIGTIG…SVDSYIPTPT (195 aa)) constitute a tr-type G domain. The G1 stretch occupies residues 19 to 26 (GHIDHGKT). 19-26 (GHIDHGKT) provides a ligand contact to GTP. Position 26 (Thr-26) interacts with Mg(2+). Positions 60 to 64 (GITIN) are G2. A G3 region spans residues 81–84 (DCPG). GTP contacts are provided by residues 81–85 (DCPGH) and 136–139 (NKCD). The interval 136 to 139 (NKCD) is G4. Residues 174–176 (SAL) are G5.

This sequence belongs to the TRAFAC class translation factor GTPase superfamily. Classic translation factor GTPase family. EF-Tu/EF-1A subfamily. In terms of assembly, monomer.

It is found in the cytoplasm. It carries out the reaction GTP + H2O = GDP + phosphate + H(+). GTP hydrolase that promotes the GTP-dependent binding of aminoacyl-tRNA to the A-site of ribosomes during protein biosynthesis. The chain is Elongation factor Tu from Malacoplasma penetrans (strain HF-2) (Mycoplasma penetrans).